The following is a 591-amino-acid chain: tRNA 5-methylaminomethyl-2-thiouridine biosynthesis bifunctional protein MnmC (591 aa).

Positions 1–232 (MTPTAPSPLV…KRERLEAWRP (232 aa)) are tRNA (mnm(5)s(2)U34)-methyltransferase. Residues 247–591 (IGGGIAGAAL…FDSPVTRSRL (345 aa)) are FAD-dependent cmnm(5)s(2)U34 oxidoreductase.

It in the N-terminal section; belongs to the methyltransferase superfamily. tRNA (mnm(5)s(2)U34)-methyltransferase family. The protein in the C-terminal section; belongs to the DAO family. Requires FAD as cofactor.

It localises to the cytoplasm. The enzyme catalyses 5-aminomethyl-2-thiouridine(34) in tRNA + S-adenosyl-L-methionine = 5-methylaminomethyl-2-thiouridine(34) in tRNA + S-adenosyl-L-homocysteine + H(+). In terms of biological role, catalyzes the last two steps in the biosynthesis of 5-methylaminomethyl-2-thiouridine (mnm(5)s(2)U) at the wobble position (U34) in tRNA. Catalyzes the FAD-dependent demodification of cmnm(5)s(2)U34 to nm(5)s(2)U34, followed by the transfer of a methyl group from S-adenosyl-L-methionine to nm(5)s(2)U34, to form mnm(5)s(2)U34. The chain is tRNA 5-methylaminomethyl-2-thiouridine biosynthesis bifunctional protein MnmC from Caulobacter vibrioides (strain ATCC 19089 / CIP 103742 / CB 15) (Caulobacter crescentus).